Here is a 970-residue protein sequence, read N- to C-terminus: Isoleucine--tRNA ligase (970 aa).

A 'HIGH' region motif is present at residues 65–75 (PYANGHLHIGH). An L-isoleucyl-5'-AMP-binding site is contributed by Glu608. Positions 649 to 653 (KMSKS) match the 'KMSKS' region motif. Lys652 lines the ATP pocket. Zn(2+)-binding residues include Cys943, Cys946, Cys962, and Cys965.

The protein belongs to the class-I aminoacyl-tRNA synthetase family. IleS type 1 subfamily. As to quaternary structure, monomer. Zn(2+) is required as a cofactor.

It is found in the cytoplasm. It catalyses the reaction tRNA(Ile) + L-isoleucine + ATP = L-isoleucyl-tRNA(Ile) + AMP + diphosphate. Catalyzes the attachment of isoleucine to tRNA(Ile). As IleRS can inadvertently accommodate and process structurally similar amino acids such as valine, to avoid such errors it has two additional distinct tRNA(Ile)-dependent editing activities. One activity is designated as 'pretransfer' editing and involves the hydrolysis of activated Val-AMP. The other activity is designated 'posttransfer' editing and involves deacylation of mischarged Val-tRNA(Ile). This chain is Isoleucine--tRNA ligase, found in Ruegeria pomeroyi (strain ATCC 700808 / DSM 15171 / DSS-3) (Silicibacter pomeroyi).